A 513-amino-acid polypeptide reads, in one-letter code: Matrix metalloproteinase-27 (513 aa).

The first 17 residues, 1-17 (MKRLLLLFLFFITFSSA), serve as a signal peptide directing secretion. Positions 18–98 (FPLVRMTENE…PRCGVPDVGQ (81 aa)) are cleaved as a propeptide — activation peptide. A glycan (N-linked (GlcNAc...) asparagine) is linked at asparagine 55. Residues 89–96 (PRCGVPDV) carry the Cysteine switch motif. Cysteine 91 lines the Zn(2+) pocket. N-linked (GlcNAc...) asparagine glycosylation is present at asparagine 110. The Ca(2+) site is built by aspartate 121 and aspartate 155. Histidine 165 provides a ligand contact to Zn(2+). 3 residues coordinate Ca(2+): aspartate 173, glycine 174, and valine 178. Histidine 181 is a Zn(2+) binding site. Positions 188 and 192 each coordinate Ca(2+). Residue histidine 194 participates in Zn(2+) binding. Ca(2+)-binding residues include aspartate 196 and glutamate 199. Zn(2+) is bound at residue histidine 216. The active site involves glutamate 217. Zn(2+) is bound by residues histidine 220 and histidine 226. Hemopexin repeat units follow at residues 276–325 (PHAC…WPSL), 326–371 (PADL…GFPG), 373–421 (VKKI…FPGI), and 422–465 (SIRV…WFQC). A disulfide bridge connects residues cysteine 279 and cysteine 465. Aspartate 286 lines the Ca(2+) pocket. Ca(2+) contacts are provided by aspartate 377 and aspartate 426. An N-linked (GlcNAc...) asparagine glycan is attached at asparagine 452. The tract at residues 466 to 513 (KEPKNSSFGFDINKEKAHSGGIKILYHKSLSLFIFGIVHLLKNTSIYQ) is required for retention in the endoplasmic reticulum.

This sequence belongs to the peptidase M10A family. It depends on Ca(2+) as a cofactor. The cofactor is Zn(2+). In terms of processing, N-glycosylated. As to expression, expressed in B-cells. Expressed in a subset of endometrial macrophages related to menstruation and in ovarian and peritoneal endometriotic lesions (at protein level).

The protein localises to the endoplasmic reticulum. Functionally, matrix metalloproteinases degrade protein components of the extracellular matrix such as fibronectin, laminin, gelatins and/or collagens. In Homo sapiens (Human), this protein is Matrix metalloproteinase-27 (MMP27).